We begin with the raw amino-acid sequence, 896 residues long: Translation initiation factor IF-2 (896 aa).

Basic and acidic residues predominate over residues 93–219; sequence VKRDPQEAER…RMAEENEKNW (127 aa). The segment at 93-307 is disordered; sequence VKRDPQEAER…GSALQQGFQK (215 aa). The span at 256 to 271 shows a compositional bias: basic residues; sequence GRSRSSKAARPAKKGN. Basic and acidic residues predominate over residues 272-285; sequence KHAESKADREEARA. The tr-type G domain maps to 395–564; that stretch reads PRAPVVTIMG…LLQAEVLELK (170 aa). A G1 region spans residues 404-411; that stretch reads GHVDHGKT. A GTP-binding site is contributed by 404-411; it reads GHVDHGKT. The interval 429–433 is G2; that stretch reads GITQH. The G3 stretch occupies residues 450 to 453; it reads DTPG. Residues 450–454 and 504–507 each bind GTP; these read DTPGH and NKID. The tract at residues 504-507 is G4; that stretch reads NKID. Positions 540-542 are G5; the sequence is SAK.

This sequence belongs to the TRAFAC class translation factor GTPase superfamily. Classic translation factor GTPase family. IF-2 subfamily.

The protein localises to the cytoplasm. In terms of biological role, one of the essential components for the initiation of protein synthesis. Protects formylmethionyl-tRNA from spontaneous hydrolysis and promotes its binding to the 30S ribosomal subunits. Also involved in the hydrolysis of GTP during the formation of the 70S ribosomal complex. This Klebsiella pneumoniae subsp. pneumoniae (strain ATCC 700721 / MGH 78578) protein is Translation initiation factor IF-2.